Reading from the N-terminus, the 286-residue chain is Beta-lactamase SHV-34 (286 aa).

The N-terminal stretch at 1-21 is a signal peptide; it reads MRYFRLCIISLLATLPLAVHA. Ser66 serves as the catalytic Acyl-ester intermediate. Cys73 and Cys119 are disulfide-bonded. Glu164 (proton acceptor) is an active-site residue. 230 to 232 is a substrate binding site; the sequence is KTG.

It belongs to the class-A beta-lactamase family.

It catalyses the reaction a beta-lactam + H2O = a substituted beta-amino acid. Hydrolyzes ceftazidime and cefotaxime. In Escherichia coli, this protein is Beta-lactamase SHV-34 (bla).